A 309-amino-acid chain; its full sequence is Cutinase (309 aa).

Positions 1 to 47 (MSALTSQPTSSGSSEKIPRLRGWRAKAAGVVLAALALTTGVAAPAPA) are cleaved as a signal peptide. The active-site Nucleophile is serine 178. Residues aspartate 224 and histidine 256 each act as charge relay system in the active site. An intrachain disulfide couples cysteine 289 to cysteine 305.

It belongs to the AB hydrolase superfamily.

It localises to the secreted. It carries out the reaction a carboxylic ester + H2O = an alcohol + a carboxylate + H(+). The catalysed reaction is a triacylglycerol + H2O = a diacylglycerol + a fatty acid + H(+). It catalyses the reaction 1,2,3-tri-(9Z-octadecenoyl)-glycerol + H2O = di-(9Z)-octadecenoylglycerol + (9Z)-octadecenoate + H(+). The enzyme catalyses (6-hydroxyhexanoyl)(n) + H2O = (6-hydroxyhexanoyl)(n-1) + 6-hydroxyhexanoate + H(+). It carries out the reaction cutin + H2O = cutin monomers.. Its activity is regulated as follows. No effect on activity by SDS or chelating agents ethylenediaminetetraacetic acid (EDTA) or sodium citrate. No effect on activity by metal ions Ag(+), Ba(2+), Ca(2+), Co(2+), Cu(2+), Mn(2+), Ni(2+), Pb(2+) or Zn(2+). Activated by 1 mM digitonin and sodium deoxycholate, and reducing agents 1 mM 1,4-dithiothreitol, beta-mercaptoethanol and ascorbic acid. Activated by benzene, n-hexane, p-xylene and toluene. Activated by Fe(3+). Inhibited slightly by 1 mM of different chain length fatty acids, and only marginally by 6.0 M urea. Inhibited strongly with chemical modification by reagents phenyl methyl sulfonylfluorid (PMSF), 1-ethyl-3-(3-dimethylaminopropyl) carbodiimide (EDAC), diethylpyrocarbonate (DEPC) and N-bromosuccinimide (NBS). Inhibited by pyridine, DMSO, t-butanol and dodecane. Inhibited by Li(+), Hg(2+) and Mg(2+). No inhibition with chemical modification by reagents N-acetylimidazole (NAI), citraconic anhydride (CA), iodoacetate (IA) and phenylglyoxal (PG). Functionally, catalyzes the hydrolysis of cutin, a polyester that forms the structure of plant cuticle. Shows esterase activity towards p-nitrophenol-linked aliphatic esters (pNP-aliphatic esters). Has a preference for medium chain length (C-4 to C-12) fatty acid esters. Active with p-nitrophenyl palmitate (p-NPP) as substrate. Hydrolyzes triacylglycerol substrates non-specifically with a preference for long, unsaturated fatty acyl chains with the highest activity for triolein. Substrates with cis-9 unsaturation are preferred over the saturated triacylglycerols. Hydrolyzes a wide range of natural oils, especially olive oil, with relatively high activity. Capable of catalyzing synthesis of the flavor ester isoamyl acetate by esterification of isoamyl alcohol using acetic acid as an acyl donor. Degrades synthetic aliphatic polyesters, namely poly(1,4-butylene succinate) extended with 1,6-diisocyanatohexane (PBSc-D) and poly(epsilon-caprolactone) (PCL) plastics. Does not degrade poly(lactic acid) (PLA) nor aromatic poly(ethylene terephthalate) (PET), the most abundant polyester plastic in the world. This is Cutinase from Amycolatopsis mediterranei (strain S699) (Nocardia mediterranei).